The sequence spans 55 residues: Large ribosomal subunit protein bL32 (55 aa).

Basic residues predominate over residues 1-19 (MAVPKRRMSRANTHSRRSQ). The tract at residues 1-20 (MAVPKRRMSRANTHSRRSQW) is disordered.

Belongs to the bacterial ribosomal protein bL32 family.

The sequence is that of Large ribosomal subunit protein bL32 from Corynebacterium jeikeium (strain K411).